A 967-amino-acid polypeptide reads, in one-letter code: Mediator of RNA polymerase II transcription subunit 14 (967 aa).

Belongs to the Mediator complex subunit 14 family. As to quaternary structure, component of the Mediator complex.

It localises to the nucleus. Its function is as follows. Component of the Mediator complex, a coactivator involved in the regulated transcription of nearly all RNA polymerase II-dependent genes. Mediator functions as a bridge to convey information from gene-specific regulatory proteins to the basal RNA polymerase II transcription machinery. Mediator is recruited to promoters by direct interactions with regulatory proteins and serves as a scaffold for the assembly of a functional preinitiation complex with RNA polymerase II and the general transcription factors. The protein is Mediator of RNA polymerase II transcription subunit 14 (RGR1) of Eremothecium gossypii (strain ATCC 10895 / CBS 109.51 / FGSC 9923 / NRRL Y-1056) (Yeast).